A 157-amino-acid polypeptide reads, in one-letter code: Cytochrome c-type biogenesis protein CcmE (157 aa).

Over 1–8 (MNPLRRKR) the chain is Cytoplasmic. A helical; Signal-anchor for type II membrane protein membrane pass occupies residues 9–29 (LLIILAVLGGVGLALTLALSA). At 30–157 (LKENINLFYT…ASMPARQADR (128 aa)) the chain is on the periplasmic side. Positions 124 and 128 each coordinate heme. A disordered region spans residues 132-157 (EVSKALRESGQATPAPASMPARQADR).

It belongs to the CcmE/CycJ family.

The protein localises to the cell inner membrane. Heme chaperone required for the biogenesis of c-type cytochromes. Transiently binds heme delivered by CcmC and transfers the heme to apo-cytochromes in a process facilitated by CcmF and CcmH. The polypeptide is Cytochrome c-type biogenesis protein CcmE (Pseudomonas syringae pv. tomato (strain ATCC BAA-871 / DC3000)).